The following is a 172-amino-acid chain: uncharacterized protein (172 aa).

A helical transmembrane segment spans residues 109-129 (MLLLYLYYNLLLLTASTPLTF).

Its subcellular location is the membrane. This is an uncharacterized protein from Saccharomyces cerevisiae (strain ATCC 204508 / S288c) (Baker's yeast).